Here is a 149-residue protein sequence, read N- to C-terminus: MIKTYVVTHLRKMEEGIPEGLQVVDLPMTSEERTQVRRRLETPSGLVLNLALPTGTVLQPGQILCVVEGVAYRVVAAPEEVLVIYPRSLKEAAQVGHLIGNLHRPIDLSGEVIAILYDAALEERLRNLGLVVVREMRSFAKTPLPGHSH.

It belongs to the UreE family.

It localises to the cytoplasm. Its function is as follows. Involved in urease metallocenter assembly. Binds nickel. Probably functions as a nickel donor during metallocenter assembly. The protein is Urease accessory protein UreE of Synechococcus sp. (strain JA-3-3Ab) (Cyanobacteria bacterium Yellowstone A-Prime).